The primary structure comprises 295 residues: Protein gurken (295 aa).

A signal peptide spans 1-26; that stretch reads MMQIPFTRIFKVIFVLSTIVAVTDCC. The Extracellular segment spans residues 27-247; the sequence is SSRILLLREH…TAQRKVRMAH (221 aa). 2 disordered regions span residues 78 to 111 and 124 to 175; these read EASA…SIAA and TDTW…NDKE. The segment covering 124–139 has biased composition (polar residues); sequence TDTWLASESSTPITDS. Composition is skewed to low complexity over residues 140–152 and 159–171; these read ETVT…THTG and SSSS…TPSP. One can recognise an EGF-like domain in the interval 179–224; that stretch reads QMLPCSEAYNTSFCLNGGHCFQHPMVNNTVFHSCLCVNDYDGERCA. 3 cysteine pairs are disulfide-bonded: Cys-183–Cys-198, Cys-192–Cys-212, and Cys-214–Cys-223. Asn-188 and Asn-205 each carry an N-linked (GlcNAc...) asparagine glycan. Residues 215 to 245 are interaction with cni; sequence VNDYDGERCAYKSWNGDYIYSPPTAQRKVRM. Residues 248–268 form a helical membrane-spanning segment; that stretch reads IVFSFPVLLMLSSLYVLFAAV. The Cytoplasmic segment spans residues 269–295; the sequence is FMLRNVPDYRRKQQQLHLHKQRFFVRC.

In terms of assembly, interacts with cni. Expressed in nurse cells and oocyte up to oogenesis stage 7. Specifically accumulates in dorsal anterior corner of the oocyte during stages 9/10, at later stages expression is seen as an anterior ring. In stage 10 ovaries, it is concentrated between the oocyte nucleus and the adjacent oolemma. During vitellogenesis stage it can be detected at the oocyte surface, especially on the microvilli. It is also found at the microvilli covering the apical surface of the follicular epithelium and within follicle cells.

It is found in the cell membrane. In terms of biological role, critical for defining the anterior-posterior and dorsal-ventral axes of the egg. May signal directly to dorsal follicle cells through the receptor torpedo (top). During oogenesis this signaling pathway instructs follicle cells to follow a dorsal pathway of development rather than the default ventral pathway. The sequence is that of Protein gurken (grk) from Drosophila melanogaster (Fruit fly).